Reading from the N-terminus, the 111-residue chain is Phosphoribosyl-ATP pyrophosphatase (111 aa).

It belongs to the PRA-PH family.

It localises to the cytoplasm. The catalysed reaction is 1-(5-phospho-beta-D-ribosyl)-ATP + H2O = 1-(5-phospho-beta-D-ribosyl)-5'-AMP + diphosphate + H(+). It functions in the pathway amino-acid biosynthesis; L-histidine biosynthesis; L-histidine from 5-phospho-alpha-D-ribose 1-diphosphate: step 2/9. This is Phosphoribosyl-ATP pyrophosphatase from Pseudomonas putida (strain GB-1).